A 456-amino-acid polypeptide reads, in one-letter code: UDP-glycosyltransferase 74D1 (456 aa).

Residues Ser-279, 332–334, 349–357, and 371–374 each bind UDP-alpha-D-glucose; these read SPQ, HCGWNSTLE, and YSDQ.

The protein belongs to the UDP-glycosyltransferase family. In terms of tissue distribution, expressed in leaves.

Functionally, glucosyltransferase that glucosylates jasmonate (JA) and JA derivatives. Also active on indole-3-acetic acid (IAA), 4-coumrate, cinnamate and caffeate. The sequence is that of UDP-glycosyltransferase 74D1 (UGT74D1) from Arabidopsis thaliana (Mouse-ear cress).